The chain runs to 138 residues: ATP synthase epsilon chain (138 aa).

The protein belongs to the ATPase epsilon chain family. In terms of assembly, F-type ATPases have 2 components, CF(1) - the catalytic core - and CF(0) - the membrane proton channel. CF(1) has five subunits: alpha(3), beta(3), gamma(1), delta(1), epsilon(1). CF(0) has three main subunits: a, b and c.

The protein localises to the cell membrane. Its function is as follows. Produces ATP from ADP in the presence of a proton gradient across the membrane. The polypeptide is ATP synthase epsilon chain (atpC) (Buchnera aphidicola subsp. Acyrthosiphon pisum (strain APS) (Acyrthosiphon pisum symbiotic bacterium)).